We begin with the raw amino-acid sequence, 357 residues long: Homoserine kinase (357 aa).

K133 participates in a covalent cross-link: Glycyl lysine isopeptide (Lys-Gly) (interchain with G-Cter in ubiquitin).

Belongs to the GHMP kinase family. Homoserine kinase subfamily. As to quaternary structure, homodimer.

It catalyses the reaction L-homoserine + ATP = O-phospho-L-homoserine + ADP + H(+). The protein operates within amino-acid biosynthesis; L-threonine biosynthesis; L-threonine from L-aspartate: step 4/5. Its function is as follows. Commits homoserine to the threonine biosynthesis pathway by catalyzing its O-phosphorylation. The polypeptide is Homoserine kinase (THR1) (Saccharomyces cerevisiae (strain ATCC 204508 / S288c) (Baker's yeast)).